Consider the following 254-residue polypeptide: 3-deoxy-manno-octulosonate cytidylyltransferase (254 aa).

The protein belongs to the KdsB family.

It localises to the cytoplasm. It catalyses the reaction 3-deoxy-alpha-D-manno-oct-2-ulosonate + CTP = CMP-3-deoxy-beta-D-manno-octulosonate + diphosphate. It participates in nucleotide-sugar biosynthesis; CMP-3-deoxy-D-manno-octulosonate biosynthesis; CMP-3-deoxy-D-manno-octulosonate from 3-deoxy-D-manno-octulosonate and CTP: step 1/1. The protein operates within bacterial outer membrane biogenesis; lipopolysaccharide biosynthesis. Its function is as follows. Activates KDO (a required 8-carbon sugar) for incorporation into bacterial lipopolysaccharide in Gram-negative bacteria. In Bordetella bronchiseptica (strain ATCC BAA-588 / NCTC 13252 / RB50) (Alcaligenes bronchisepticus), this protein is 3-deoxy-manno-octulosonate cytidylyltransferase.